The sequence spans 380 residues: Cytochrome b (380 aa).

The next 4 helical transmembrane spans lie at 34 to 54, 78 to 99, 114 to 134, and 179 to 199; these read FGSL…LLAA, WLIR…YLHI, WNTG…GYVL, and FFTL…IHLT. Heme b is bound by residues His-84 and His-98. Residues His-183 and His-197 each contribute to the heme b site. His-202 contributes to the a ubiquinone binding site. A run of 4 helical transmembrane segments spans residues 227 to 247, 289 to 309, 321 to 341, and 348 to 368; these read LKDT…ALFS, LGGV…PLLH, LFQL…WVGS, and FIII…ILFP.

Belongs to the cytochrome b family. In terms of assembly, the cytochrome bc1 complex contains 11 subunits: 3 respiratory subunits (MT-CYB, CYC1 and UQCRFS1), 2 core proteins (UQCRC1 and UQCRC2) and 6 low-molecular weight proteins (UQCRH/QCR6, UQCRB/QCR7, UQCRQ/QCR8, UQCR10/QCR9, UQCR11/QCR10 and a cleavage product of UQCRFS1). This cytochrome bc1 complex then forms a dimer. It depends on heme b as a cofactor.

The protein resides in the mitochondrion inner membrane. In terms of biological role, component of the ubiquinol-cytochrome c reductase complex (complex III or cytochrome b-c1 complex) that is part of the mitochondrial respiratory chain. The b-c1 complex mediates electron transfer from ubiquinol to cytochrome c. Contributes to the generation of a proton gradient across the mitochondrial membrane that is then used for ATP synthesis. This Grus nigricollis (Black-necked crane) protein is Cytochrome b (MT-CYB).